The chain runs to 88 residues: Small ribosomal subunit protein bS16c (88 aa).

This sequence belongs to the bacterial ribosomal protein bS16 family.

The protein resides in the plastid. The protein localises to the chloroplast. The sequence is that of Small ribosomal subunit protein bS16c from Atropa belladonna (Belladonna).